Reading from the N-terminus, the 32-residue chain is Delta-actitoxin-Eqd1a (32 aa).

It belongs to the sea anemone short toxin (type III) family. Contains 4 disulfide bonds.

Its subcellular location is the secreted. The protein resides in the nematocyst. Its function is as follows. Binds specifically to sodium channels (Nav) of the axonal membrane of crayfish and prolongs the falling phase of the action potential. It also increases the maximum rates of rise of both action potential and resting potential. Is only active on crustaceans. The chain is Delta-actitoxin-Eqd1a from Entacmaea quadricolor (Bubble-tip anemone).